A 718-amino-acid chain; its full sequence is DNA ligase (718 aa).

Residues 44 to 48 (DADYD), 93 to 94 (SL), and Glu-127 contribute to the NAD(+) site. Lys-129 (N6-AMP-lysine intermediate) is an active-site residue. The NAD(+) site is built by Arg-150, Glu-186, Lys-302, and Lys-326. Zn(2+) contacts are provided by Cys-432, Cys-435, Cys-456, and Cys-462. A BRCT domain is found at 640-718 (TAGSPVAGKT…EDEWLALISG (79 aa)).

It belongs to the NAD-dependent DNA ligase family. LigA subfamily. Requires Mg(2+) as cofactor. It depends on Mn(2+) as a cofactor.

The catalysed reaction is NAD(+) + (deoxyribonucleotide)n-3'-hydroxyl + 5'-phospho-(deoxyribonucleotide)m = (deoxyribonucleotide)n+m + AMP + beta-nicotinamide D-nucleotide.. Its function is as follows. DNA ligase that catalyzes the formation of phosphodiester linkages between 5'-phosphoryl and 3'-hydroxyl groups in double-stranded DNA using NAD as a coenzyme and as the energy source for the reaction. It is essential for DNA replication and repair of damaged DNA. This is DNA ligase from Rhizobium etli (strain ATCC 51251 / DSM 11541 / JCM 21823 / NBRC 15573 / CFN 42).